The primary structure comprises 218 residues: Eukaryotic translation initiation factor 3 subunit K (218 aa).

A2 carries the post-translational modification N-acetylalanine. T28 carries the post-translational modification Phosphothreonine. The PCI domain occupies Y42 to K204. S217 bears the Phosphoserine mark.

Component of the eukaryotic translation initiation factor 3 (eIF-3) complex, which is composed of 13 subunits: EIF3A, EIF3B, EIF3C, EIF3D, EIF3E, EIF3F, EIF3G, EIF3H, EIF3I, EIF3J, EIF3K, EIF3L and EIF3M. The eIF-3 complex appears to include 3 stable modules: module A is composed of EIF3A, EIF3B, EIF3G and EIF3I; module B is composed of EIF3F, EIF3H, and EIF3M; and module C is composed of EIF3C, EIF3D, EIF3E, EIF3K and EIF3L. EIF3C of module C binds EIF3B of module A and EIF3H of module B, thereby linking the three modules. EIF3J is a labile subunit that binds to the eIF-3 complex via EIF3B. The eIF-3 complex interacts with RPS6KB1 under conditions of nutrient depletion. Mitogenic stimulation leads to binding and activation of a complex composed of MTOR and RPTOR, leading to phosphorylation and release of RPS6KB1 and binding of EIF4B to eIF-3. Interacts with CCND3, but not with CCND1 and CCND2. Ubiquitous, with the highest levels of expression in brain, testis and kidney.

It is found in the nucleus. It localises to the cytoplasm. Functionally, component of the eukaryotic translation initiation factor 3 (eIF-3) complex, which is required for several steps in the initiation of protein synthesis. The eIF-3 complex associates with the 40S ribosome and facilitates the recruitment of eIF-1, eIF-1A, eIF-2:GTP:methionyl-tRNAi and eIF-5 to form the 43S pre-initiation complex (43S PIC). The eIF-3 complex stimulates mRNA recruitment to the 43S PIC and scanning of the mRNA for AUG recognition. The eIF-3 complex is also required for disassembly and recycling of post-termination ribosomal complexes and subsequently prevents premature joining of the 40S and 60S ribosomal subunits prior to initiation. The eIF-3 complex specifically targets and initiates translation of a subset of mRNAs involved in cell proliferation, including cell cycling, differentiation and apoptosis, and uses different modes of RNA stem-loop binding to exert either translational activation or repression. The polypeptide is Eukaryotic translation initiation factor 3 subunit K (Homo sapiens (Human)).